A 404-amino-acid chain; its full sequence is Sulfate adenylyltransferase (404 aa).

Belongs to the sulfate adenylyltransferase family.

It catalyses the reaction sulfate + ATP + H(+) = adenosine 5'-phosphosulfate + diphosphate. It functions in the pathway sulfur metabolism; hydrogen sulfide biosynthesis; sulfite from sulfate: step 1/3. The protein is Sulfate adenylyltransferase of Chlorobium chlorochromatii (strain CaD3).